A 771-amino-acid polypeptide reads, in one-letter code: Probable dipeptidyl peptidase 4 (771 aa).

The signal sequence occupies residues 1–16 (MKYSKLLLLLVSVVQA). N-linked (GlcNAc...) asparagine glycosylation is found at Asn-37, Asn-80, Asn-114, Asn-173, Asn-222, Asn-470, and Asn-495. Catalysis depends on charge relay system residues Ser-618, Asp-695, and His-730.

The protein belongs to the peptidase S9B family.

The protein localises to the secreted. It carries out the reaction Release of an N-terminal dipeptide, Xaa-Yaa-|-Zaa-, from a polypeptide, preferentially when Yaa is Pro, provided Zaa is neither Pro nor hydroxyproline.. Its function is as follows. Extracellular dipeptidyl-peptidase which removes N-terminal dipeptides sequentially from polypeptides having unsubstituted N-termini provided that the penultimate residue is proline. This is Probable dipeptidyl peptidase 4 (dpp4) from Aspergillus flavus (strain ATCC 200026 / FGSC A1120 / IAM 13836 / NRRL 3357 / JCM 12722 / SRRC 167).